Here is a 160-residue protein sequence, read N- to C-terminus: Transcription elongation factor GreA (160 aa).

A coiled-coil region spans residues 1–72 (MAEKTYPMTQ…QIQILETKIR (72 aa)).

This sequence belongs to the GreA/GreB family.

In terms of biological role, necessary for efficient RNA polymerase transcription elongation past template-encoded arresting sites. The arresting sites in DNA have the property of trapping a certain fraction of elongating RNA polymerases that pass through, resulting in locked ternary complexes. Cleavage of the nascent transcript by cleavage factors such as GreA or GreB allows the resumption of elongation from the new 3'terminus. GreA releases sequences of 2 to 3 nucleotides. The polypeptide is Transcription elongation factor GreA (Streptococcus agalactiae serotype Ia (strain ATCC 27591 / A909 / CDC SS700)).